The following is a 511-amino-acid chain: Coiled-coil domain-containing protein 125 (511 aa).

The segment covering 1–12 has biased composition (polar residues); it reads MSKVARSSSESD. The tract at residues 1–110 is disordered; it reads MSKVARSSSE…TVDSNSELSN (110 aa). Basic and acidic residues predominate over residues 43-54; it reads EFSHRSRKRSDG. A compositionally biased stretch (polar residues) spans 83–108; it reads QDTFPQVSRISNYRRQSSTVDSNSEL. Coiled-coil stretches lie at residues 105 to 243 and 293 to 325; these read NSEL…LEAL and RMAA…MADA. The residue at position 504 (serine 504) is a Phosphoserine.

Its subcellular location is the cytoplasm. In terms of biological role, may be involved in the regulation of cell migration. The polypeptide is Coiled-coil domain-containing protein 125 (CCDC125) (Homo sapiens (Human)).